Consider the following 432-residue polypeptide: Glutamate-1-semialdehyde 2,1-aminomutase (432 aa).

Lys270 is modified (N6-(pyridoxal phosphate)lysine).

This sequence belongs to the class-III pyridoxal-phosphate-dependent aminotransferase family. HemL subfamily. In terms of assembly, homodimer. Pyridoxal 5'-phosphate is required as a cofactor.

Its subcellular location is the cytoplasm. It carries out the reaction (S)-4-amino-5-oxopentanoate = 5-aminolevulinate. The protein operates within porphyrin-containing compound metabolism; protoporphyrin-IX biosynthesis; 5-aminolevulinate from L-glutamyl-tRNA(Glu): step 2/2. This is Glutamate-1-semialdehyde 2,1-aminomutase from Acinetobacter baumannii (strain ACICU).